The primary structure comprises 273 residues: NADPH-dependent 7-cyano-7-deazaguanine reductase (273 aa).

Residue 81–83 participates in substrate binding; it reads VES. An NADPH-binding site is contributed by 83 to 84; the sequence is SK. The active-site Thioimide intermediate is Cys-179. Asp-186 (proton donor) is an active-site residue. 218 to 219 provides a ligand contact to substrate; the sequence is AE. 247–248 is a binding site for NADPH; it reads RG.

It belongs to the GTP cyclohydrolase I family. QueF type 2 subfamily. Homodimer.

The protein localises to the cytoplasm. It catalyses the reaction 7-aminomethyl-7-carbaguanine + 2 NADP(+) = 7-cyano-7-deazaguanine + 2 NADPH + 3 H(+). The protein operates within tRNA modification; tRNA-queuosine biosynthesis. Functionally, catalyzes the NADPH-dependent reduction of 7-cyano-7-deazaguanine (preQ0) to 7-aminomethyl-7-deazaguanine (preQ1). This chain is NADPH-dependent 7-cyano-7-deazaguanine reductase, found in Rickettsia prowazekii (strain Madrid E).